Reading from the N-terminus, the 262-residue chain is Acyl-[acyl-carrier-protein]--UDP-N-acetylglucosamine O-acyltransferase (262 aa).

It belongs to the transferase hexapeptide repeat family. LpxA subfamily. In terms of assembly, homotrimer.

The protein localises to the cytoplasm. It catalyses the reaction a (3R)-hydroxyacyl-[ACP] + UDP-N-acetyl-alpha-D-glucosamine = a UDP-3-O-[(3R)-3-hydroxyacyl]-N-acetyl-alpha-D-glucosamine + holo-[ACP]. It functions in the pathway glycolipid biosynthesis; lipid IV(A) biosynthesis; lipid IV(A) from (3R)-3-hydroxytetradecanoyl-[acyl-carrier-protein] and UDP-N-acetyl-alpha-D-glucosamine: step 1/6. In terms of biological role, involved in the biosynthesis of lipid A, a phosphorylated glycolipid that anchors the lipopolysaccharide to the outer membrane of the cell. In Haemophilus influenzae (strain PittEE), this protein is Acyl-[acyl-carrier-protein]--UDP-N-acetylglucosamine O-acyltransferase.